The primary structure comprises 173 residues: Streptothricin acetyltransferase A (173 aa).

Residues 21 to 173 enclose the N-acetyltransferase domain; the sequence is VVFGRMIPAF…EIAIFWYYKF (153 aa).

Belongs to the acetyltransferase family. GNAT subfamily. In terms of assembly, homodimer.

It carries out the reaction streptothricin D + acetyl-CoA = N(beta)-acetylstreptothricin D + CoA + H(+). It catalyses the reaction streptothricin F + acetyl-CoA = N(beta)-acetylstreptothricin F + CoA + H(+). Its function is as follows. Involved in resistance to streptothricin, a broad-spectrum antibiotic produced by streptomycetes. Detoxifies streptothricin via acetylation of the beta amino group of the first beta-lysyl moiety of streptothricin. This Bacillus subtilis (strain 168) protein is Streptothricin acetyltransferase A.